Here is a 295-residue protein sequence, read N- to C-terminus: Protease HtpX (295 aa).

2 helical membrane passes run 5–25 (VILF…SMRL) and 43–63 (ALLI…LAIS). His148 contacts Zn(2+). Glu149 is a catalytic residue. Zn(2+) is bound at residue His152. 2 consecutive transmembrane segments (helical) span residues 159–179 (VTLA…ARII) and 198–218 (FFIT…LIVL). Glu225 is a Zn(2+) binding site.

It belongs to the peptidase M48B family. It depends on Zn(2+) as a cofactor.

It localises to the cell inner membrane. This chain is Protease HtpX, found in Nitrosococcus oceani (strain ATCC 19707 / BCRC 17464 / JCM 30415 / NCIMB 11848 / C-107).